Reading from the N-terminus, the 418-residue chain is Adenylosuccinate synthetase 2 (418 aa).

Residues 12–18 (GDEGKGR) and 40–42 (GHT) each bind GTP. Aspartate 13 (proton acceptor) is an active-site residue. Aspartate 13 and glycine 40 together coordinate Mg(2+). IMP contacts are provided by residues 13-16 (DEGK), 38-41 (NAGH), threonine 127, lysine 141, threonine 239, and arginine 301. Residue histidine 41 is the Proton donor of the active site. Position 297–303 (297–303 (AVTGRPR)) interacts with substrate. Residues arginine 303, 329-331 (KID), and 407-409 (SVG) each bind GTP.

The protein belongs to the adenylosuccinate synthetase family. In terms of assembly, homodimer. Requires Mg(2+) as cofactor.

The protein resides in the cytoplasm. The catalysed reaction is IMP + L-aspartate + GTP = N(6)-(1,2-dicarboxyethyl)-AMP + GDP + phosphate + 2 H(+). It participates in purine metabolism; AMP biosynthesis via de novo pathway; AMP from IMP: step 1/2. Functionally, plays an important role in the de novo pathway of purine nucleotide biosynthesis. Catalyzes the first committed step in the biosynthesis of AMP from IMP. The sequence is that of Adenylosuccinate synthetase 2 from Pseudoalteromonas translucida (strain TAC 125).